Reading from the N-terminus, the 255-residue chain is 2,3-dehydroadipyl-CoA hydratase (255 aa).

The protein belongs to the enoyl-CoA hydratase/isomerase family.

The enzyme catalyses a (3S)-3-hydroxyacyl-CoA = a (2E)-enoyl-CoA + H2O. The catalysed reaction is a 4-saturated-(3S)-3-hydroxyacyl-CoA = a (3E)-enoyl-CoA + H2O. It participates in aromatic compound metabolism; phenylacetate degradation. Functionally, catalyzes the reversible conversion of enzymatically produced 2,3-dehydroadipyl-CoA into 3-hydroxyadipyl-CoA. This is 2,3-dehydroadipyl-CoA hydratase (paaF) from Escherichia coli (strain K12).